A 469-amino-acid chain; its full sequence is UDP-N-acetylmuramate--L-alanine ligase (469 aa).

112-118 (GTHGKTT) serves as a coordination point for ATP.

The protein belongs to the MurCDEF family.

The protein localises to the cytoplasm. It carries out the reaction UDP-N-acetyl-alpha-D-muramate + L-alanine + ATP = UDP-N-acetyl-alpha-D-muramoyl-L-alanine + ADP + phosphate + H(+). It participates in cell wall biogenesis; peptidoglycan biosynthesis. Cell wall formation. The polypeptide is UDP-N-acetylmuramate--L-alanine ligase (Herminiimonas arsenicoxydans).